Consider the following 397-residue polypeptide: Elongation factor Tu (397 aa).

Positions 10–206 (KPHVNIGTIG…AVDDSIPEPQ (197 aa)) constitute a tr-type G domain. The segment at 19-26 (GHIDHGKT) is G1. 19–26 (GHIDHGKT) provides a ligand contact to GTP. Position 26 (Thr-26) interacts with Mg(2+). The interval 62–66 (GITIS) is G2. The segment at 83–86 (DCPG) is G3. Residues 83–87 (DCPGH) and 138–141 (NKAD) each bind GTP. The tract at residues 138–141 (NKAD) is G4. The tract at residues 176–178 (SAL) is G5.

Belongs to the TRAFAC class translation factor GTPase superfamily. Classic translation factor GTPase family. EF-Tu/EF-1A subfamily. In terms of assembly, monomer.

Its subcellular location is the cytoplasm. The enzyme catalyses GTP + H2O = GDP + phosphate + H(+). In terms of biological role, GTP hydrolase that promotes the GTP-dependent binding of aminoacyl-tRNA to the A-site of ribosomes during protein biosynthesis. The chain is Elongation factor Tu from Frankia alni (strain DSM 45986 / CECT 9034 / ACN14a).